The sequence spans 1358 residues: Phosphoinositide 3-kinase regulatory subunit 4 (1358 aa).

G2 is lipidated: N-myristoyl glycine. Residues 26–324 form the Protein kinase domain; that stretch reads FEYDKSLGST…AFPEIFYTFL (299 aa). ATP is bound by residues 32–40 and K53; that span reads LGSTRFFKV. The Proton acceptor role is filled by D148. 3 HEAT repeats span residues 413–450, 458–495, and 572–610; these read ILLD…LVKE, IYPE…TALR, and KAND…YVGW. Phosphoserine is present on residues S808, S813, S853, and S865. The interval 875–898 is disordered; it reads LPKGSDQEVIQTGKPPRSESSAGI. WD repeat units lie at residues 991-1030, 1040-1079, 1093-1134, 1139-1178, 1182-1223, and 1237-1278; these read EHKS…GKTT, RIGG…LPKS, KEDG…NAWT, LKSG…PISS, PSRA…RRFT, and PSPH…RSYV. The tract at residues 1307–1326 is disordered; that stretch reads KQKVGPSDDTPRRGPESLPV. A compositionally biased stretch (basic and acidic residues) spans 1315-1326; the sequence is DTPRRGPESLPV. The residue at position 1316 (T1316) is a Phosphothreonine. The WD 7 repeat unit spans residues 1327-1358; sequence GHHDIITDVATFQTTQGFIVTASRDGIVKVWK.

This sequence belongs to the protein kinase superfamily. Ser/Thr protein kinase family. As to quaternary structure, component of the PI3K (PI3KC3/PI3K-III/class III phosphatidylinositol 3-kinase) complex the core of which is composed of the catalytic subunit PIK3C3, the regulatory subunit PIK3R4 and BECN1 associating with additional regulatory/auxiliary subunits to form alternative complex forms. Alternative complex forms containing a fourth regulatory subunit in a mutually exclusive manner are PI3K complex I (PI3KC3-C1) containing ATG14, and PI3K complex II (PI3KC3-C2) containing UVRAG. PI3KC3-C1 displays a V-shaped architecture with PIK3R4 serving as a bridge between PIK3C3 and the ATG14:BECN1 subcomplex. Both, PI3KC3-C1 and PI3KC3-C2, can associate with further regulatory subunits, such as RUBCN, SH3GLB1/Bif-1, AMBRA1 and NRBF2. PI3KC3-C1 probably associates with PIK3CB. Interacts with RAB7A in the presence of PIK3C3/VPS34. Interacts with NRBF2. Interacts with ARMC3. Mn(2+) is required as a cofactor. In terms of processing, myristoylated. Probably autophosphorylated. Ubiquitously expressed.

The protein resides in the late endosome. It is found in the cytoplasmic vesicle. It localises to the autophagosome. The protein localises to the membrane. The enzyme catalyses L-seryl-[protein] + ATP = O-phospho-L-seryl-[protein] + ADP + H(+). It catalyses the reaction L-threonyl-[protein] + ATP = O-phospho-L-threonyl-[protein] + ADP + H(+). In terms of biological role, regulatory subunit of the PI3K complex that mediates formation of phosphatidylinositol 3-phosphate; different complex forms are believed to play a role in multiple membrane trafficking pathways: PI3KC3-C1 is involved in initiation of autophagosomes and PI3KC3-C2 in maturation of autophagosomes and endocytosis. Involved in regulation of degradative endocytic trafficking and cytokinesis, probably in the context of PI3KC3-C2. This chain is Phosphoinositide 3-kinase regulatory subunit 4 (PIK3R4), found in Homo sapiens (Human).